A 148-amino-acid polypeptide reads, in one-letter code: MPSRLRKTRKLRGHVSHGHGRIGKHRKHPGGRGNAGGMHHHRINFDKYHPGYFGKVGMRHYHLKRNQSFCPTVNLDKLWTLVSEQTRVNAAKNKTGVAPIIDVVRSGYYKVLGKGKLPKQPVIVKAKFFSRRAEEKIKGVGGACVLVA.

Residues 1–30 (MPSRLRKTRKLRGHVSHGHGRIGKHRKHPG) show a composition bias toward basic residues. Residues 1 to 37 (MPSRLRKTRKLRGHVSHGHGRIGKHRKHPGGRGNAGG) are disordered. His-39 bears the (3S)-3-hydroxyhistidine mark. Residues Lys-47 and Lys-55 each carry the N6-acetyllysine modification. Ser-68 carries the post-translational modification Phosphoserine. Lys-110 bears the N6-acetyllysine mark.

Belongs to the universal ribosomal protein uL15 family. Component of the large ribosomal subunit. Post-translationally, hydroxylated on His-39 by MINA.

It is found in the cytoplasm. Component of the large ribosomal subunit. The ribosome is a large ribonucleoprotein complex responsible for the synthesis of proteins in the cell. The protein is Large ribosomal subunit protein uL15 (Rpl27a) of Mus musculus (Mouse).